The primary structure comprises 435 residues: Hyaluronidase-1 (435 aa).

A signal peptide spans 1 to 21 (MAAHLLPICALFLTLLDMAQG). 2 disulfide bridges follow: cysteine 43–cysteine 333 and cysteine 207–cysteine 221. The N-linked (GlcNAc...) asparagine glycan is linked to asparagine 99. Glutamate 131 (proton donor) is an active-site residue. 2 N-linked (GlcNAc...) asparagine glycosylation sites follow: asparagine 216 and asparagine 350. Positions 354–430 (GALLCSQALC…YPGWQAPWCE (77 aa)) constitute an EGF-like domain. 3 cysteine pairs are disulfide-bonded: cysteine 358/cysteine 369, cysteine 363/cysteine 418, and cysteine 420/cysteine 429.

The protein belongs to the glycosyl hydrolase 56 family. In terms of tissue distribution, highly expressed in the liver, kidney and heart. Weakly expressed in lung, placenta and skeletal muscle. No expression detected in adult brain. Isoform 1 is expressed only in bladder and prostate cancer cells, G2/G3 bladder tumor tissues and lymph node specimens showing tumor invasive tumors cells. Isoform 3, isoform 4, isoform 5 and isoform 6 are expressed in normal bladder and bladder tumor tissues.

Its subcellular location is the secreted. It localises to the lysosome. It carries out the reaction Random hydrolysis of (1-&gt;4)-linkages between N-acetyl-beta-D-glucosamine and D-glucuronate residues in hyaluronate.. Its function is as follows. May have a role in promoting tumor progression. May block the TGFB1-enhanced cell growth. This is Hyaluronidase-1 (HYAL1) from Homo sapiens (Human).